The chain runs to 159 residues: Anaerobic nitrite reductase HB2 (159 aa).

Residues 2-152 (GFTEKQEGLV…LAEAIKAEMK (151 aa)) form the Globin domain. A Homodimerization motif is present at residues 35–39 (EIAPG). Heme b-binding residues include serine 45, lysine 59, histidine 63, and histidine 98. The short motif at 105-117 (DPHFEVVKEALLR) is the Homodimerization element.

The protein belongs to the plant globin family. In terms of assembly, homodimer. Requires heme b as cofactor.

The protein localises to the cytoplasm. Its subcellular location is the nucleus. It carries out the reaction Fe(III)-heme b-[protein] + nitric oxide + H2O = Fe(II)-heme b-[protein] + nitrite + 2 H(+). In terms of biological role, phytoglobin that reduces nitrite to nitric oxide (NO) under anoxic conditions (e.g. during flooding or in waterlogged soil). May not function as an oxygen storage or transport protein. Has an unusually high affinity for O(2) through an hexacoordinate heme iron because of a very low dissociation constant. The chain is Anaerobic nitrite reductase HB2 from Gossypium hirsutum (Upland cotton).